A 554-amino-acid polypeptide reads, in one-letter code: (E)-nerolidol synthase TPS18VF (554 aa).

(2E,6E)-farnesyl diphosphate-binding residues include Arg276, Asp313, Asp317, Arg455, and Asp458. Mg(2+)-binding residues include Asp313 and Asp317. A DDXXD motif motif is present at residues 313-317; the sequence is DDIFD. Mg(2+) contacts are provided by Asp458, Ser462, and Glu466.

The protein belongs to the terpene synthase family. Tpsb subfamily. Mg(2+) serves as cofactor. Mn(2+) is required as a cofactor. Highly expressed in glandular trichomes.

It carries out the reaction (2E,6E)-farnesyl diphosphate + H2O = (6E)-nerolidol + diphosphate. The catalysed reaction is (2E)-geranyl diphosphate + H2O = (R)-linalool + diphosphate. It catalyses the reaction (2E)-geranyl diphosphate + H2O = (S)-linalool + diphosphate. The protein operates within secondary metabolite biosynthesis; terpenoid biosynthesis. Its function is as follows. Involved in sesquiterpene olefins biosynthesis, constituants of cannabinoids and terpenoids-rich resins. Catalyzes primarily the conversion of (2E)-farnesyl diphosphate to (E)-nerolidol, and the conversion of (2E)-geranyl diphosphate to (+)linalool and (-)linalool. In Cannabis sativa (Hemp), this protein is (E)-nerolidol synthase TPS18VF.